A 3092-amino-acid chain; its full sequence is Inhibitory regulator protein IRA1 (3092 aa).

Disordered regions lie at residues 375–430 (HLHH…MASL) and 450–487 (LGQA…NSAN). The segment covering 379–400 (SSSSSKTTNTNSPNSISKTSIK) has biased composition (low complexity). Polar residues predominate over residues 401–430 (QSSVNASGNVSPSQFSTGNDASPTSPMASL). A compositionally biased stretch (low complexity) spans 455–487 (TSTSTTAATTKTDADTPSTMNTNNNNNNNNSAN). 2 positions are modified to phosphoserine: Ser-497 and Ser-915. Disordered regions lie at residues 946 to 988 (SGVP…VLSS) and 1003 to 1023 (TILK…ADDK). The span at 965–988 (QSPYSSPPQLQQSDLPSPLSVLSS) shows a compositional bias: low complexity. Residue Ser-1342 is modified to Phosphoserine. Residues 1725 to 1930 (NASHILVTEL…DKIFNFLSEL (206 aa)) form the Ras-GAP domain. Phosphoserine; by PKA is present on residues Ser-1753 and Ser-3004.

The protein localises to the cytoplasm. Its function is as follows. Inhibitory regulator of the Ras-cyclic AMP pathway in S.cerevisiae. Stimulates the GTPase activity of Ras proteins. The polypeptide is Inhibitory regulator protein IRA1 (IRA1) (Saccharomyces cerevisiae (strain ATCC 204508 / S288c) (Baker's yeast)).